Consider the following 179-residue polypeptide: Probable splicing factor, arginine/serine-rich 6 (179 aa).

In terms of domain architecture, RRM spans alanine 3 to glycine 76. Positions threonine 75–histidine 179 are disordered. Residues arginine 78–glycine 93 are compositionally biased toward gly residues. Residues glycine 94–histidine 160 show a composition bias toward basic and acidic residues. The segment covering serine 161 to serine 173 has biased composition (basic residues).

Belongs to the splicing factor SR family. Extensively phosphorylated on serine residues in the RS domain.

The protein localises to the nucleus. Functionally, plays a functionally redundant role in shifting germ cell sexual differentiation in hermaprodites. Required for the development of somatic gonad structures and for progression from larval stage to adulthood. This Caenorhabditis elegans protein is Probable splicing factor, arginine/serine-rich 6 (rsp-6).